The chain runs to 264 residues: Thymidylate synthase (264 aa).

Arg-21 provides a ligand contact to dUMP. Residue His-51 coordinates (6R)-5,10-methylene-5,6,7,8-tetrahydrofolate. DUMP is bound at residue 126-127 (RR). Cys-146 (nucleophile) is an active-site residue. Residues 166-169 (RSAD), Asn-177, and 207-209 (HIY) each bind dUMP. Residue Asp-169 coordinates (6R)-5,10-methylene-5,6,7,8-tetrahydrofolate. Ala-263 serves as a coordination point for (6R)-5,10-methylene-5,6,7,8-tetrahydrofolate.

It belongs to the thymidylate synthase family. Bacterial-type ThyA subfamily. Homodimer.

The protein localises to the cytoplasm. It carries out the reaction dUMP + (6R)-5,10-methylene-5,6,7,8-tetrahydrofolate = 7,8-dihydrofolate + dTMP. The protein operates within pyrimidine metabolism; dTTP biosynthesis. Catalyzes the reductive methylation of 2'-deoxyuridine-5'-monophosphate (dUMP) to 2'-deoxythymidine-5'-monophosphate (dTMP) while utilizing 5,10-methylenetetrahydrofolate (mTHF) as the methyl donor and reductant in the reaction, yielding dihydrofolate (DHF) as a by-product. This enzymatic reaction provides an intracellular de novo source of dTMP, an essential precursor for DNA biosynthesis. This is Thymidylate synthase from Vesicomyosocius okutanii subsp. Calyptogena okutanii (strain HA).